A 351-amino-acid chain; its full sequence is Cell cycle control protein 50B (351 aa).

Over 1 to 33 the chain is Cytoplasmic; the sequence is MTWSATARGAHQPDNTAFTQQRLPAWQPLLSAS. A helical membrane pass occupies residues 34–54; the sequence is IALPLFFCAGLAFIGLGLGLY. Residues 55-315 are Exoplasmic loop-facing; sequence YSSNGIKELE…SISWMGGKNP (261 aa). N-linked (GlcNAc...) asparagine glycans are attached at residues asparagine 75, asparagine 213, and asparagine 286. Residues 316–336 traverse the membrane as a helical segment; the sequence is FLGIAYLVVGSLCILTGFVML. The Cytoplasmic portion of the chain corresponds to 337-351; that stretch reads VVYIRYQDQDDDDEE.

The protein belongs to the CDC50/LEM3 family. In terms of assembly, component of a P4-ATPase flippase complex which consists of a catalytic alpha subunit and an accessory beta subunit. Interacts with alpha subunits ATP8A1, ATP8B1, ATP8B2 and ATP8B4.

It is found in the cell membrane. Functionally, accessory component of a P4-ATPase flippase complex which catalyzes the hydrolysis of ATP coupled to the transport of aminophospholipids from the outer to the inner leaflet of various membranes and ensures the maintenance of asymmetric distribution of phospholipids. Phospholipid translocation also seems to be implicated in vesicle formation and in uptake of lipid signaling molecules. The beta subunit may assist in binding of the phospholipid substrate. Can mediate the export of alpha subunits ATP8A1, ATP8B1, ATP8B2 and ATP8B4 from the ER to the plasma membrane. This chain is Cell cycle control protein 50B (TMEM30B), found in Homo sapiens (Human).